The chain runs to 600 residues: PWWP domain-containing protein 2B (600 aa).

Disordered stretches follow at residues 81 to 115, 143 to 171, 186 to 350, 366 to 408, and 426 to 477; these read ETGP…PVPA, WVPQ…LILS, KSTV…LGDG, GCPR…PQGK, and DCTS…TVPP. Pro residues predominate over residues 104–115; that stretch reads EPPPPLIPPVPA. Positions 151–160 are enriched in basic residues; it reads TIKRTRRRLS. A compositionally biased stretch (polar residues) spans 187–200; it reads STVSPQEASPSPLN. A phosphoserine mark is found at serine 190 and serine 210. The span at 239 to 252 shows a compositional bias: basic and acidic residues; sequence EKREEDRVAGERVP. The residue at position 254 (serine 254) is a Phosphoserine. The span at 286–297 shows a compositional bias: polar residues; it reads PQQSLQNGSQDS. Basic and acidic residues predominate over residues 298–309; that stretch reads EVSRDVEPRGGG. Residues 328–339 show a composition bias toward pro residues; the sequence is PVPPISDLPPPK. Low complexity predominate over residues 381–395; it reads DGSSHGLEDLSSGSS. A compositionally biased stretch (polar residues) spans 443-456; it reads SSGSEVTSPDTGDL. Serine 457 carries the post-translational modification Phosphoserine. The span at 457 to 468 shows a compositional bias: low complexity; the sequence is SSGDSASVPSSS. One can recognise a PWWP domain in the interval 500–560; sequence VGDIVWGKIH…ISKLSPFSEF (61 aa).

In terms of assembly, component of a MTA1-specific subcomplex of the NuRD complex composed of PWWP2B, MTA1 and HDAC1 but does not contain CHD4 and MBD3. Interacts with MTA1, MTA2, MTA3, HDAC1, HDAC2, RBBP4, RBBP7, BRCC3 and ZNF516. Does not interact with CHD4 and MBD3. In terms of processing, deubiquitinated by BRCC3; leading to its stabilization. In terms of tissue distribution, expressed in the brown adipose tissue.

Its subcellular location is the nucleus. Functionally, chromatin-binding protein that acts as an adapter between distinct nucleosome components (H3K36me3 or H2A.Z) and chromatin-modifying complexes, contributing to the regulation of the levels of histone acetylation at actively transcribed genes. Competes with CHD4 and MBD3 for interaction with MTA1 to form a NuRD subcomplex, preventing the formation of full NuRD complex (containing CHD4 and MBD3), leading to recruitment of HDACs to gene promoters resulting in turn in the deacetylation of nearby H3K27 and H2A.Z. Plays a role in facilitating transcriptional elongation through regulation of histone acetylation. Negatively regulates brown adipocyte thermogenesis by interacting with and stabilizing HDAC1 at the UCP1 gene promoter, thereby promoting histone deacetylation at the promoter leading to the repression of UCP1 expression. In Mus musculus (Mouse), this protein is PWWP domain-containing protein 2B (Pwwp2b).